A 449-amino-acid chain; its full sequence is Glucose-6-phosphate isomerase (449 aa).

Glu291 serves as the catalytic Proton donor. Active-site residues include His312 and Lys426.

Belongs to the GPI family.

The protein localises to the cytoplasm. It catalyses the reaction alpha-D-glucose 6-phosphate = beta-D-fructose 6-phosphate. It participates in carbohydrate biosynthesis; gluconeogenesis. It functions in the pathway carbohydrate degradation; glycolysis; D-glyceraldehyde 3-phosphate and glycerone phosphate from D-glucose: step 2/4. Functionally, catalyzes the reversible isomerization of glucose-6-phosphate to fructose-6-phosphate. This Streptococcus pyogenes serotype M3 (strain ATCC BAA-595 / MGAS315) protein is Glucose-6-phosphate isomerase.